Here is a 177-residue protein sequence, read N- to C-terminus: UPF0177 protein YxdF (177 aa).

Helical transmembrane passes span 2-22 (TLVLILIFIIAWKLGYLKNTL), 30-50 (IFWLMGIVFFTLATNYLVTVL), 117-137 (ALVHTGFSWYLLPYLILSFII), and 152-172 (IVHSSVNLFGGSAIKLLDTFF).

The protein belongs to the UPF0177 family.

The protein resides in the cell membrane. The sequence is that of UPF0177 protein YxdF (yxdF) from Lactococcus lactis subsp. lactis (strain IL1403) (Streptococcus lactis).